Consider the following 391-residue polypeptide: BRCA1-A complex subunit Abraxas 1 (391 aa).

An MPN domain is found at 8 to 156; the sequence is VRISGFVLSS…THRLEFSAFI (149 aa). A coiled-coil region spans residues 223 to 261; that stretch reads LLAEMQKVCVEVEKSERTVEKLQEDIAQLKEAIGKQKTH. The segment at 354–391 is disordered; the sequence is QRLKRKRKTREVSESASESGSDTEIEMNGQSGSNSPVF. A compositionally biased stretch (polar residues) spans 367–391; it reads ESASESGSDTEIEMNGQSGSNSPVF. S388 carries the post-translational modification Phosphoserine. The pSXXF motif signature appears at 388 to 391; the sequence is SPVF.

This sequence belongs to the FAM175 family. Abraxas subfamily. Component of the ARISC complex. Component of the BRCA1-A complex. Homodimer. Post-translationally, phosphorylation of Ser-388 of the pSXXF motif by ATM or ATR constitutes a specific recognition motif for the BRCT domain of BRCA1.

It is found in the nucleus. Its function is as follows. Involved in DNA damage response and double-strand break (DSB) repair. Component of the BRCA1-A complex, acting as a central scaffold protein that assembles the various components of the complex. The BRCA1-A complex specifically recognizes 'Lys-63'-linked ubiquitinated histones H2A and H2AX at DNA lesion sites. This complex also possesses deubiquitinase activity that specifically removes 'Lys-63'-linked ubiquitin on histones H2A and H2AX. In Danio rerio (Zebrafish), this protein is BRCA1-A complex subunit Abraxas 1.